The primary structure comprises 233 residues: Large ribosomal subunit protein uL1 (233 aa).

The protein belongs to the universal ribosomal protein uL1 family. As to quaternary structure, part of the 50S ribosomal subunit.

Functionally, binds directly to 23S rRNA. The L1 stalk is quite mobile in the ribosome, and is involved in E site tRNA release. In terms of biological role, protein L1 is also a translational repressor protein, it controls the translation of the L11 operon by binding to its mRNA. This Photorhabdus laumondii subsp. laumondii (strain DSM 15139 / CIP 105565 / TT01) (Photorhabdus luminescens subsp. laumondii) protein is Large ribosomal subunit protein uL1.